A 230-amino-acid polypeptide reads, in one-letter code: Nicotinamide riboside kinase 2 (230 aa).

Gly9 to Thr17 serves as a coordination point for ATP. Mg(2+) is bound by residues Thr16 and Asp35. Residue Asp35 is the Proton acceptor of the active site. Residues Asp35–Phe38 and Trp54–Asp55 contribute to the substrate site. Arg130 contributes to the ATP binding site. Substrate is bound by residues Arg131 and Tyr136–Thr137. Residues Arg134–Tyr136 and Lys174–Arg176 each bind ATP. A disordered region spans residues Leu191–Met230.

It belongs to the uridine kinase family. NRK subfamily. In terms of assembly, monomer. Interacts with ITGB1 alone or when associated with alpha-7, but not with alpha-5. Predominantly expressed in skeletal muscle and, at a much lower level, in the heart (at protein level). No expression in brain, kidney, liver, lung, pancreas nor placenta.

The enzyme catalyses beta-nicotinamide D-riboside + ATP = beta-nicotinamide D-ribonucleotide + ADP + H(+). It catalyses the reaction beta-D-ribosylnicotinate + ATP = nicotinate beta-D-ribonucleotide + ADP + H(+). Its pathway is cofactor biosynthesis; NAD(+) biosynthesis. Its function is as follows. Catalyzes the phosphorylation of nicotinamide riboside (NR) and nicotinic acid riboside (NaR) to form nicotinamide mononucleotide (NMN) and nicotinic acid mononucleotide (NaMN). Reduces laminin matrix deposition and cell adhesion to laminin, but not to fibronectin. Involved in the regulation of PXN at the protein level and of PXN tyrosine phosphorylation. May play a role in the regulation of terminal myogenesis. The protein is Nicotinamide riboside kinase 2 (NMRK2) of Homo sapiens (Human).